The chain runs to 415 residues: MYLKIVILVTFPLVCFTQDDTPLSKPMAIDYQAEFAWDLYKKLQLGFTQNLAIAPYSLRKIFVCLQQLTVSTNPASAALSEQLKNVLKFNPKGKLPDLVRRRYSSQRAMLERENSFNTTTLAAVIGREKKTNSFWDLPNSCAIFVGSLRPGSPKQMSRRFNAAMRNISKSGMQNFLSTSDIDRDLDFLIADSWIFKGLWSYQFEEQHTTTCNFYTNSTSKGLMRFMYLQEYLKYGYFSEWNVEAVELPLHHGSSFSCMLMMPVKADIGVLIKSLNHRRFKDIYSKMSFSKTDVRLPQFTLRIKFSAKSILQQFGFNAAFNESVFHVFDNKNAVPLGDVIQKVKLVMDHDGEQSAKMYVDRRMGNLFIAHQPFIFVIFEKTQLVPIIVGHMVTASTPKDIGPESDEISCDRPPRYQ.

A signal peptide spans 1–17; that stretch reads MYLKIVILVTFPLVCFT. N-linked (GlcNAc...) asparagine glycans are attached at residues Asn-117, Asn-166, Asn-216, and Asn-320.

It belongs to the serpin family. In terms of assembly, (Microbial infection) Interacts with Zika virus envelope protein E and Zika virus-like particles; the interaction does not affect Zika virus replication in human endothelial cells and keratinocytes. Post-translationally, the N-terminus is blocked. Female salivary gland (at protein level). Not detected in female carcass without head and salivary glands. Not detected in male tissues.

The protein localises to the secreted. In terms of biological role, anticoagulant serpin-type protein inhibiting host coagulation factor Xa (F10). Does not inhibit host thrombin (F2) and trypsin. (Microbial infection) Does not affect Zika virus replication in human endothelial cells and keratinocytes. The sequence is that of FXa-directed anticoagulant from Aedes aegypti (Yellowfever mosquito).